A 469-amino-acid polypeptide reads, in one-letter code: MIPRIMSTQHPDNYSIPFFANSPVLGGEDEITEAFYAFNVLGADEQMWDFEGKEVDEFVVKKLLERYPSFFRKVILGKDVRLTPRVPNPTVEKAEAKLLLETLQGITRAADYARVFYGEDIAPIFEVILPMTTSLAEIERVHELYRKVVNLADERIYDTTVKEWIGEFYPKEIGIIPLFETKVALLKSAKIIGEYLERREPEYQRVFLARSDPAMNYGLISAVTYVKNALQEIWELEEETSIPIYPIVGVGGPPFRGGMRPDNVDNVLSEYPSVQTYTVQSSFKFDYPTKEVVKAVEKVKSTKRKEPYSLEVPDFITLYEVEYQRQVKILAPHIRRLATRIPDRRKRKLHIGLFGYSRNVGGLSLPRAIKFTASLYSIGVPPELLGLNALTDRQLDVVSEYYVNIYEDLEFAMRFFSFRVAEKAGLKELVERIKEFKPEIEEEYVAEAEIVFRGEGDIIKLAQMRGFLG.

This sequence belongs to the PEPCase type 2 family. In terms of assembly, homotetramer. Mg(2+) is required as a cofactor.

It catalyses the reaction oxaloacetate + phosphate = phosphoenolpyruvate + hydrogencarbonate. Its function is as follows. Catalyzes the irreversible beta-carboxylation of phosphoenolpyruvate (PEP) to form oxaloacetate (OAA), a four-carbon dicarboxylic acid source for the tricarboxylic acid cycle. This is Phosphoenolpyruvate carboxylase from Pyrococcus abyssi (strain GE5 / Orsay).